The following is a 221-amino-acid chain: Transmembrane emp24 domain-containing protein 3 (221 aa).

The first 25 residues, 1 to 25 (MVHEAPHASSFQMLLQLLLLLLLRA), serve as a signal peptide directing secretion. Over 28 to 184 (LRSAELTFEL…RAEDLNSRVS (157 aa)) the chain is Lumenal. Positions 42-124 (KQCFHEEVEQ…HKTVYFDFQV (83 aa)) constitute a GOLD domain. At arginine 103 the chain carries Dimethylated arginine. The helical transmembrane segment at 185–205 (YWSVGETIALFVVSFSQVLLL) threads the bilayer. The Cytoplasmic segment spans residues 206–221 (KSFFTEKRPVNRAVHS). The COPII vesicle coat-binding motif lies at 208–209 (FF). Residues 208–221 (FFTEKRPVNRAVHS) carry the COPI vesicle coat-binding motif.

This sequence belongs to the EMP24/GP25L family. Monomer in endoplasmic reticulum, endoplasmic reticulum-Golgi intermediate compartment and cis-Golgi network. Interacts (via C-terminus) with COPG1; the interaction involves dimeric TMED3; however, there are conflicting reports on the interaction. Interacts with GORASP1 and GORASP2.

The protein localises to the endoplasmic reticulum-Golgi intermediate compartment membrane. It localises to the golgi apparatus. Its subcellular location is the cis-Golgi network membrane. It is found in the golgi stack membrane. The protein resides in the endoplasmic reticulum membrane. The protein localises to the cytoplasmic vesicle. It localises to the COPI-coated vesicle membrane. Potential role in vesicular protein trafficking, mainly in the early secretory pathway. Contributes to the coupled localization of TMED2 and TMED10 in the cis-Golgi network. This is Transmembrane emp24 domain-containing protein 3 (Tmed3) from Mus musculus (Mouse).